A 296-amino-acid chain; its full sequence is Coatomer subunit epsilon (296 aa).

The protein belongs to the COPE family. As to quaternary structure, oligomeric complex that consists of at least the alpha, beta, beta', gamma, delta, epsilon and zeta subunits. Interacts with the ESCRT-0 subunit VPS27.

The protein resides in the cytoplasm. It is found in the golgi apparatus membrane. The protein localises to the cytoplasmic vesicle. It localises to the COPI-coated vesicle membrane. In terms of biological role, the coatomer is a cytosolic protein complex that binds to dilysine motifs and reversibly associates with Golgi non-clathrin-coated vesicles, which further mediate biosynthetic protein transport from the ER, via the Golgi up to the trans Golgi network. The coatomer complex is required for budding from Golgi membranes, and is essential for the retrograde Golgi-to-ER transport of dilysine-tagged proteins. In Saccharomyces cerevisiae (strain ATCC 204508 / S288c) (Baker's yeast), this protein is Coatomer subunit epsilon (SEC28).